A 296-amino-acid polypeptide reads, in one-letter code: Elongation factor Ts (296 aa).

An involved in Mg(2+) ion dislocation from EF-Tu region spans residues 81 to 84 (TDFV).

The protein belongs to the EF-Ts family.

It localises to the cytoplasm. Its function is as follows. Associates with the EF-Tu.GDP complex and induces the exchange of GDP to GTP. It remains bound to the aminoacyl-tRNA.EF-Tu.GTP complex up to the GTP hydrolysis stage on the ribosome. This Ruthia magnifica subsp. Calyptogena magnifica protein is Elongation factor Ts.